A 356-amino-acid chain; its full sequence is UDP-N-acetylglucosamine--N-acetylmuramyl-(pentapeptide) pyrophosphoryl-undecaprenol N-acetylglucosamine transferase (356 aa).

UDP-N-acetyl-alpha-D-glucosamine is bound by residues 12–14 (TGG), asparagine 124, arginine 163, serine 188, isoleucine 242, and glutamine 287.

It belongs to the glycosyltransferase 28 family. MurG subfamily.

It localises to the cell inner membrane. It carries out the reaction di-trans,octa-cis-undecaprenyl diphospho-N-acetyl-alpha-D-muramoyl-L-alanyl-D-glutamyl-meso-2,6-diaminopimeloyl-D-alanyl-D-alanine + UDP-N-acetyl-alpha-D-glucosamine = di-trans,octa-cis-undecaprenyl diphospho-[N-acetyl-alpha-D-glucosaminyl-(1-&gt;4)]-N-acetyl-alpha-D-muramoyl-L-alanyl-D-glutamyl-meso-2,6-diaminopimeloyl-D-alanyl-D-alanine + UDP + H(+). It participates in cell wall biogenesis; peptidoglycan biosynthesis. In terms of biological role, cell wall formation. Catalyzes the transfer of a GlcNAc subunit on undecaprenyl-pyrophosphoryl-MurNAc-pentapeptide (lipid intermediate I) to form undecaprenyl-pyrophosphoryl-MurNAc-(pentapeptide)GlcNAc (lipid intermediate II). The protein is UDP-N-acetylglucosamine--N-acetylmuramyl-(pentapeptide) pyrophosphoryl-undecaprenol N-acetylglucosamine transferase of Pseudomonas savastanoi pv. phaseolicola (strain 1448A / Race 6) (Pseudomonas syringae pv. phaseolicola (strain 1448A / Race 6)).